Consider the following 350-residue polypeptide: Ribonuclease H2 subunit B (350 aa).

Over residues 134-151 (QDYSNSSDTGENQKSNSK) the composition is skewed to polar residues. The interval 134-153 (QDYSNSSDTGENQKSNSKTN) is disordered.

The protein belongs to the RNase H2 subunit B family. Highly divergent. The RNase 2 complex is a heterotrimer composed of the catalytic subunit RNH201 and of the non-catalytic subunits RNH202 and RNH203.

It localises to the nucleus. Functionally, non catalytic subunit of RNase H2, an endonuclease that specifically degrades the RNA of RNA:DNA hybrids. Participates in DNA replication, possibly by mediating the removal of lagging-strand Okazaki fragment RNA primers during DNA replication. Mediates the excision of single ribonucleotides from DNA:RNA duplexes. This is Ribonuclease H2 subunit B (RNH202) from Saccharomyces cerevisiae (strain ATCC 204508 / S288c) (Baker's yeast).